A 707-amino-acid polypeptide reads, in one-letter code: Metal transporter CNNM3 (707 aa).

The chain crosses the membrane as a helical span at residues Leu-11–Ala-27. A glycan (N-linked (GlcNAc...) asparagine) is linked at Asn-73. The region spanning Glu-130–Val-308 is the CNNM transmembrane domain. The next 3 membrane-spanning stretches (helical) occupy residues Cys-193–Leu-213, Ala-221–Ala-241, and Leu-261–Ala-281. CBS domains follow at residues Leu-318–Leu-379 and Tyr-386–Glu-452. At Ser-661 the chain carries Phosphoserine. Over residues Leu-678 to Ser-691 the composition is skewed to polar residues. Residues Leu-678 to Val-707 are disordered. Residue Ser-700 is modified to Phosphoserine.

The protein belongs to the ACDP family. In terms of tissue distribution, widely expressed. Expressed at higher level in heart and spleen.

Its subcellular location is the cell membrane. Its function is as follows. Probable metal transporter. The chain is Metal transporter CNNM3 (CNNM3) from Homo sapiens (Human).